The following is a 335-amino-acid chain: Transcriptional activator NphR (335 aa).

Residues 231–329 form the HTH araC/xylS-type domain; it reads TRVQRVIEQN…GSSPGLYRKE (99 aa). 2 DNA-binding regions (H-T-H motif) span residues 249 to 270 and 296 to 319; these read SDIAAAAGMSLRTVHKLFNAEG and VADVSECAGFRDVSHFSRLFRSTF.

Functionally, transcriptional activator of nphA1 and nphA2 involved in the degradation of 4-nitrophenol (4-NP). In Rhodococcus sp, this protein is Transcriptional activator NphR (nphR).